Here is a 280-residue protein sequence, read N- to C-terminus: Energy-coupling factor transporter ATP-binding protein EcfA1 (280 aa).

One can recognise an ABC transporter domain in the interval 7-241 (IEVAHLKYEY…GQRLLDLGLD (235 aa)). 41 to 48 (GHNGSGKS) serves as a coordination point for ATP.

It belongs to the ABC transporter superfamily. Energy-coupling factor EcfA family. As to quaternary structure, forms a stable energy-coupling factor (ECF) transporter complex composed of 2 membrane-embedded substrate-binding proteins (S component), 2 ATP-binding proteins (A component) and 2 transmembrane proteins (T component).

The protein localises to the cell membrane. Functionally, ATP-binding (A) component of a common energy-coupling factor (ECF) ABC-transporter complex. Unlike classic ABC transporters this ECF transporter provides the energy necessary to transport a number of different substrates. The protein is Energy-coupling factor transporter ATP-binding protein EcfA1 of Latilactobacillus sakei subsp. sakei (strain 23K) (Lactobacillus sakei subsp. sakei).